We begin with the raw amino-acid sequence, 1128 residues long: Glutamate receptor-interacting protein 1 (1128 aa).

S43 is subject to Phosphoserine. 6 consecutive PDZ domains span residues 53 to 136 (VVEL…EYEL), 150 to 238 (TVEV…EYDV), 252 to 336 (LVEV…LPHH), 472 to 561 (EVVL…EFDV), 573 to 658 (HVKL…RKDE), and 673 to 755 (TVEL…KKQT). Disordered regions lie at residues 754 to 798 (QTDA…YPST) and 935 to 981 (MSLN…GRKS). A compositionally biased stretch (polar residues) spans 944-974 (PRSQLGRQASFQERSSSRPHYSQTTRSNTLP). One can recognise a PDZ 7 domain in the interval 1004 to 1086 (KVTLYKDSDM…KLDLVISRNP (83 aa)). Residues 1093–1115 (IDQQSLPGDWSEQNSAFFQQPSH) are compositionally biased toward polar residues. The interval 1093–1128 (IDQQSLPGDWSEQNSAFFQQPSHGGNLETREPTNTL) is disordered.

As to quaternary structure, interacts with EPHA7, EPHB2, KIF5A, KIF5B, KIF5C, GRIA2, GRIA3, GRIPAP1/GRASP1, PPFIA1, PPFIA4, FRAS1, PLCD4, PTPRF and liprins-alpha. Can form homomultimers or heteromultimers with GRIP2. Forms a ternary complex with GRIA2 and CSPG4. Interacts with ATAD1 in an ATP-dependent manner. ATAD1-catalyzed ATP hydrolysis disrupts binding to ATAD1 and to GRIA2 and leads to AMPAR complex disassembly. Interacts with EFNB1, EFNB3 and the C-terminal tail of PRLHR. Interacts with SLC30A9. Interacts with BUD23. Forms a complex with NSG1, GRIA2 and STX12; controls the intracellular fate of AMPAR and the endosomal sorting of the GRIA2 subunit toward recycling and membrane targeting. Interacts with NSG1.

It localises to the cytoplasmic vesicle. The protein resides in the perikaryon. It is found in the cell projection. Its subcellular location is the dendrite. The protein localises to the cytoplasm. It localises to the endomembrane system. The protein resides in the postsynaptic cell membrane. It is found in the postsynaptic density. Its subcellular location is the endoplasmic reticulum membrane. In terms of biological role, may play a role as a localized scaffold for the assembly of a multiprotein signaling complex and as mediator of the trafficking of its binding partners at specific subcellular location in neurons. Through complex formation with NSG1, GRIA2 and STX12 controls the intracellular fate of AMPAR and the endosomal sorting of the GRIA2 subunit toward recycling and membrane targeting. This chain is Glutamate receptor-interacting protein 1 (GRIP1), found in Homo sapiens (Human).